Here is a 365-residue protein sequence, read N- to C-terminus: Probable tRNA pseudouridine synthase B (365 aa).

The active-site Nucleophile is the aspartate 43. Residues 209-285 enclose the PUA domain; sequence YPKIVVKRSA…DHIFLEADDG (77 aa). The segment at 300 to 365 is disordered; that stretch reads SGSGLHKDIQ…GKERHGRDHQ (66 aa). Composition is skewed to basic and acidic residues over residues 304-318, 326-336, and 354-365; these read LHKD…KDTR, TGPEKTADRVW, and GGGKERHGRDHQ.

The protein belongs to the pseudouridine synthase TruB family. Type 2 subfamily.

It carries out the reaction uridine(55) in tRNA = pseudouridine(55) in tRNA. In terms of biological role, could be responsible for synthesis of pseudouridine from uracil-55 in the psi GC loop of transfer RNAs. The sequence is that of Probable tRNA pseudouridine synthase B from Thermoplasma acidophilum (strain ATCC 25905 / DSM 1728 / JCM 9062 / NBRC 15155 / AMRC-C165).